The following is a 337-amino-acid chain: Beta-hexosaminidase (337 aa).

Residues Asp62, Arg70, Arg133, and 163-164 contribute to the substrate site; that span reads KH. Catalysis depends on His176, which acts as the Proton donor/acceptor. The Nucleophile role is filled by Asp248.

It belongs to the glycosyl hydrolase 3 family. NagZ subfamily.

It localises to the cytoplasm. It catalyses the reaction Hydrolysis of terminal non-reducing N-acetyl-D-hexosamine residues in N-acetyl-beta-D-hexosaminides.. It functions in the pathway cell wall biogenesis; peptidoglycan recycling. Plays a role in peptidoglycan recycling by cleaving the terminal beta-1,4-linked N-acetylglucosamine (GlcNAc) from peptide-linked peptidoglycan fragments, giving rise to free GlcNAc, anhydro-N-acetylmuramic acid and anhydro-N-acetylmuramic acid-linked peptides. In Psychromonas ingrahamii (strain DSM 17664 / CCUG 51855 / 37), this protein is Beta-hexosaminidase.